Reading from the N-terminus, the 1043-residue chain is Unconventional myosin-Ia (1043 aa).

The Myosin motor domain occupies 8–694 (VGVEDLILLE…TLFYLEEQRR (687 aa)). Position 101 to 108 (101 to 108 (GESGAGKT)) interacts with ATP. Positions 571–593 (VAVLMKNLYSKNPNYIRCIKPND) are actin-binding. 3 consecutive IQ domains span residues 697 to 719 (LQQLATLIQKVYRGWRCRTHYQQ), 720 to 742 (MRKSQILISAWFRGNKQKKHYGK), and 743 to 772 (IRSSVLLIQAFVRGWRARKNYRKYFRSGAA). Residues 858-1042 (KASYPQSVPI…KGSNAMEVTV (185 aa)) enclose the TH1 domain.

The protein belongs to the TRAFAC class myosin-kinesin ATPase superfamily. Myosin family. Post-translationally, phosphorylated by ALPK1.

In terms of biological role, involved in directing the movement of organelles along actin filaments. This Mus musculus (Mouse) protein is Unconventional myosin-Ia (Myo1a).